A 20-amino-acid chain; its full sequence is Neurotoxin BmK 18(2) (20 aa).

Residues 2–20 (RDAYIAEDYDCVYHCARDA) enclose the LCN-type CS-alpha/beta domain.

This sequence belongs to the long (4 C-C) scorpion toxin superfamily. Sodium channel inhibitor family. Alpha subfamily. In terms of tissue distribution, expressed by the venom gland.

It localises to the secreted. Binds to sodium channels (Nav) and inhibits the inactivation of the activated channels, thereby blocking neuronal transmission. This Olivierus martensii (Manchurian scorpion) protein is Neurotoxin BmK 18(2).